A 262-amino-acid polypeptide reads, in one-letter code: 3-methyl-2-oxobutanoate hydroxymethyltransferase (262 aa).

Mg(2+) is bound by residues Asp-44 and Asp-83. 3-methyl-2-oxobutanoate-binding positions include 44 to 45 (DS), Asp-83, and Lys-111. Glu-113 is a Mg(2+) binding site. Glu-180 serves as the catalytic Proton acceptor.

This sequence belongs to the PanB family. As to quaternary structure, homodecamer; pentamer of dimers. It depends on Mg(2+) as a cofactor.

The protein resides in the cytoplasm. The catalysed reaction is 3-methyl-2-oxobutanoate + (6R)-5,10-methylene-5,6,7,8-tetrahydrofolate + H2O = 2-dehydropantoate + (6S)-5,6,7,8-tetrahydrofolate. The protein operates within cofactor biosynthesis; (R)-pantothenate biosynthesis; (R)-pantoate from 3-methyl-2-oxobutanoate: step 1/2. Its function is as follows. Catalyzes the reversible reaction in which hydroxymethyl group from 5,10-methylenetetrahydrofolate is transferred onto alpha-ketoisovalerate to form ketopantoate. This chain is 3-methyl-2-oxobutanoate hydroxymethyltransferase, found in Alcanivorax borkumensis (strain ATCC 700651 / DSM 11573 / NCIMB 13689 / SK2).